The chain runs to 274 residues: NH(3)-dependent NAD(+) synthetase (274 aa).

46-53 lines the ATP pocket; it reads GISGGQDS. Residue Asp52 participates in Mg(2+) binding. Arg140 provides a ligand contact to deamido-NAD(+). Thr160 contacts ATP. Glu165 lines the Mg(2+) pocket. The deamido-NAD(+) site is built by Lys173 and Asp180. ATP-binding residues include Lys189 and Thr211. Deamido-NAD(+) is bound at residue 260–261; that stretch reads HK.

This sequence belongs to the NAD synthetase family. Homodimer.

The catalysed reaction is deamido-NAD(+) + NH4(+) + ATP = AMP + diphosphate + NAD(+) + H(+). The protein operates within cofactor biosynthesis; NAD(+) biosynthesis; NAD(+) from deamido-NAD(+) (ammonia route): step 1/1. Its function is as follows. Catalyzes the ATP-dependent amidation of deamido-NAD to form NAD. Uses ammonia as a nitrogen source. This Streptococcus gordonii (strain Challis / ATCC 35105 / BCRC 15272 / CH1 / DL1 / V288) protein is NH(3)-dependent NAD(+) synthetase.